Reading from the N-terminus, the 333-residue chain is G-protein coupled receptor 146 (333 aa).

Over 1–21 (MWSCEDLNYTNSGEEQYLCNE) the chain is Extracellular. Residue asparagine 8 is glycosylated (N-linked (GlcNAc...) asparagine). The chain crosses the membrane as a helical span at residues 22-42 (FHLFLFIFSVLYLIICFPVGL). Over 43 to 65 (CYNVQLVLVNLYNKATMTMPDVY) the chain is Cytoplasmic. A helical membrane pass occupies residues 66–86 (FVNMAIAGLIINAVAPVYLFG). Residues 87–102 (PAYTKWSLWSFGNEVY) lie on the Extracellular side of the membrane. Residues 103 to 123 (ITLLILFNVSSLVIMYSTTLL) traverse the membrane as a helical segment. Residues 124–146 (SLDYYIECALPRTYMSSVYNTKH) are Cytoplasmic-facing. The helical transmembrane segment at 147-167 (VCGFIWGGAVLTSFSSLLFYI) threads the bilayer. The Extracellular segment spans residues 168–189 (CNHVSTKIIECSKMQNREAADA). Residues 190 to 210 (IMVLIGYVVPIIAVIYALVLI) form a helical membrane-spanning segment. At 211-234 (LQIRKEATPLDQESGRLDPSVHRL) the chain is on the cytoplasmic side. The chain crosses the membrane as a helical span at residues 235–255 (LIATVCTQFILWTPYYVTLLV). At 256 to 275 (NTFMDARVKSSNTFYIRIFQ) the chain is on the extracellular side. Residues 276–296 (FTEGLSNFLAFSSSFVLPLIH) form a helical membrane-spanning segment. Over 297-333 (RHINKNFSGKLQRLLKRLHCGSQGCTHEHTVVQQVMT) the chain is Cytoplasmic.

It belongs to the G-protein coupled receptor 1 family.

Its subcellular location is the cell membrane. G-protein coupled receptor required for the regulation of plasma cholesterol levels. This chain is G-protein coupled receptor 146 (gpr146), found in Xenopus laevis (African clawed frog).